The primary structure comprises 561 residues: Oligo-1,6-glucosidase 1 (561 aa).

Ca(2+) contacts are provided by D20, N22, D24, F26, and D28. The active-site Nucleophile is D199. Residue E255 is the Proton donor of the active site.

This sequence belongs to the glycosyl hydrolase 13 family.

It is found in the cytoplasm. It catalyses the reaction Hydrolysis of (1-&gt;6)-alpha-D-glucosidic linkages in some oligosaccharides produced from starch and glycogen by alpha-amylase, and in isomaltose.. In terms of biological role, hydrolyzes various disaccharides such as sucrose, maltose, and isomaltose with different efficiencies. Also hydrolyzes longer maltodextrins from maltotriose up to maltohexaose, but not maltoheptaose, palatinose, isomaltotriose, or isomaltotetraose. This chain is Oligo-1,6-glucosidase 1 (malL), found in Bacillus subtilis (strain 168).